We begin with the raw amino-acid sequence, 692 residues long: Elongation factor G (692 aa).

The 276-residue stretch at 8-283 folds into the tr-type G domain; sequence EKVRNIGIAA…AVVDYLPAPT (276 aa). GTP contacts are provided by residues 17 to 24, 81 to 85, and 135 to 138; these read AHIDAGKT, DTPGH, and NKMD.

Belongs to the TRAFAC class translation factor GTPase superfamily. Classic translation factor GTPase family. EF-G/EF-2 subfamily.

The protein resides in the cytoplasm. Catalyzes the GTP-dependent ribosomal translocation step during translation elongation. During this step, the ribosome changes from the pre-translocational (PRE) to the post-translocational (POST) state as the newly formed A-site-bound peptidyl-tRNA and P-site-bound deacylated tRNA move to the P and E sites, respectively. Catalyzes the coordinated movement of the two tRNA molecules, the mRNA and conformational changes in the ribosome. This Nitratiruptor sp. (strain SB155-2) protein is Elongation factor G.